Reading from the N-terminus, the 1462-residue chain is FYVE, RhoGEF and PH domain-containing protein 5 (1462 aa).

Disordered regions lie at residues 37–323 (GRLP…SAEE), 492–512 (YVPE…APGI), 592–613 (SGSF…SSMV), 670–718 (HVDV…ASES), 746–777 (EDRS…YENI), and 851–887 (CPIS…THKV). The span at 72–82 (PLREDEPKDEG) shows a compositional bias: basic and acidic residues. 2 stretches are compositionally biased toward acidic residues: residues 95 to 106 (SAEEEEEREEGG) and 137 to 151 (EGTD…EGCA). The span at 161 to 177 (SRSEEEEKLVQPHRECS) shows a compositional bias: basic and acidic residues. Acidic residues-rich tracts occupy residues 211–220 (GEAEEDDEEG) and 242–255 (MGQD…EPPE). The segment covering 592 to 611 (SGSFSQRNHLPSSGTSTPSS) has biased composition (polar residues). A compositionally biased stretch (low complexity) spans 676-685 (SSSRSSSESS). Residues 858–887 (PKEDLTSDEEQRSSEEEDSASRDPSVTHKV) are compositionally biased toward basic and acidic residues. Residues 892–1084 (RALVIAQELL…SKVTDRANDS (193 aa)) form the DH domain. The PH 1 domain occupies 1113 to 1207 (EFLKEGTLMK…WYGCLSRALP (95 aa)). The FYVE-type zinc-finger motif lies at 1242–1301 (VTHVMMCMNCGCDFSLTLRRHHCHACGKIVCRNCSRNKYPLKYLKDRMAKVCDGCFGELK). 8 residues coordinate Zn(2+): Cys-1248, Cys-1251, Cys-1264, Cys-1267, Cys-1272, Cys-1275, Cys-1293, and Cys-1296. A PH 2 domain is found at 1363-1461 (GSAISGYLSR…WIEAMEDASV (99 aa)).

Expressed in endothelial cells (at protein level).

It localises to the cytoplasm. It is found in the cytoskeleton. The protein localises to the cell projection. The protein resides in the ruffle membrane. Its subcellular location is the endoplasmic reticulum. It localises to the golgi apparatus. It is found in the early endosome. Activates CDC42, a member of the Ras-like family of Rho- and Rac proteins, by exchanging bound GDP for free GTP. Mediates VEGF-induced CDC42 activation. May regulate proangiogenic action of VEGF in vascular endothelial cells, including network formation, directional movement and proliferation. May play a role in regulating the actin cytoskeleton and cell shape. This is FYVE, RhoGEF and PH domain-containing protein 5 (FGD5) from Homo sapiens (Human).